The primary structure comprises 1649 residues: DNA-directed RNA polymerase subunit beta' (1649 aa).

Residues Cys-62, Cys-64, Cys-77, and Cys-80 each contribute to the Zn(2+) site. 3 residues coordinate Mg(2+): Asp-746, Asp-748, and Asp-750. Zn(2+)-binding residues include Cys-1077, Cys-1268, Cys-1275, and Cys-1278.

Belongs to the RNA polymerase beta' chain family. As to quaternary structure, the RNAP catalytic core consists of 2 alpha, 1 beta, 1 beta' and 1 omega subunit. When a sigma factor is associated with the core the holoenzyme is formed, which can initiate transcription. The cofactor is Mg(2+). Zn(2+) is required as a cofactor.

It carries out the reaction RNA(n) + a ribonucleoside 5'-triphosphate = RNA(n+1) + diphosphate. In terms of biological role, DNA-dependent RNA polymerase catalyzes the transcription of DNA into RNA using the four ribonucleoside triphosphates as substrates. The chain is DNA-directed RNA polymerase subunit beta' from Thermosipho africanus (strain TCF52B).